The following is a 128-amino-acid chain: Large-conductance mechanosensitive channel (128 aa).

2 helical membrane passes run 11–31 (FALKGNVLDLAVAVVIGAAFG) and 70–90 (GAFIQSIVDFIIIAFAIFIFV).

The protein belongs to the MscL family. In terms of assembly, homopentamer.

Its subcellular location is the cell membrane. Channel that opens in response to stretch forces in the membrane lipid bilayer. May participate in the regulation of osmotic pressure changes within the cell. The sequence is that of Large-conductance mechanosensitive channel from Listeria monocytogenes serotype 4a (strain HCC23).